The sequence spans 248 residues: Protein-lysine N-methyltransferase EFM5 (248 aa).

It belongs to the class I-like SAM-binding methyltransferase superfamily. EFM5 family.

It is found in the cytoplasm. S-adenosyl-L-methionine-dependent protein-lysine N-methyltransferase that trimethylates elongation factor 1-alpha (TEF1 and TEF2) at 'Lys-79'. Required for replication of Brome mosaic virus (BMV). The sequence is that of Protein-lysine N-methyltransferase EFM5 from Saccharomyces cerevisiae (strain ATCC 204508 / S288c) (Baker's yeast).